Reading from the N-terminus, the 346-residue chain is Methylthioribose-1-phosphate isomerase (346 aa).

Residues 46 to 48 (RGA), Arg-89, and Gln-196 each bind substrate. Residue Asp-237 is the Proton donor of the active site. A substrate-binding site is contributed by 247–248 (NK).

Belongs to the eIF-2B alpha/beta/delta subunits family. MtnA subfamily.

The enzyme catalyses 5-(methylsulfanyl)-alpha-D-ribose 1-phosphate = 5-(methylsulfanyl)-D-ribulose 1-phosphate. Its pathway is amino-acid biosynthesis; L-methionine biosynthesis via salvage pathway; L-methionine from S-methyl-5-thio-alpha-D-ribose 1-phosphate: step 1/6. Catalyzes the interconversion of methylthioribose-1-phosphate (MTR-1-P) into methylthioribulose-1-phosphate (MTRu-1-P). This Trichlorobacter lovleyi (strain ATCC BAA-1151 / DSM 17278 / SZ) (Geobacter lovleyi) protein is Methylthioribose-1-phosphate isomerase.